The primary structure comprises 180 residues: Translation initiation factor IF-3 (180 aa).

This sequence belongs to the IF-3 family. In terms of assembly, monomer.

Its subcellular location is the cytoplasm. IF-3 binds to the 30S ribosomal subunit and shifts the equilibrium between 70S ribosomes and their 50S and 30S subunits in favor of the free subunits, thus enhancing the availability of 30S subunits on which protein synthesis initiation begins. The protein is Translation initiation factor IF-3 of Salmonella typhimurium (strain LT2 / SGSC1412 / ATCC 700720).